The primary structure comprises 118 residues: Melanoma antigen recognized by T-cells 1 (118 aa).

The chain crosses the membrane as a helical span at residues 27 to 47; it reads AAGIGILTVILGVLLLIGCWY. Over 48–118 the chain is Cytoplasmic; that stretch reads CRRRNGYRAL…AEQSPPPYSP (71 aa). Residues 78-118 are disordered; that stretch reads GFDHRDSKVSLQEKNCEPVVPNAPPAYEKLSAEQSPPPYSP. Ser-108 carries the phosphoserine modification.

Interacts with PMEL. Interacts with GPR143. Acylated. In terms of tissue distribution, expression is restricted to melanoma and melanocyte cell lines and retina.

The protein resides in the endoplasmic reticulum membrane. Its subcellular location is the golgi apparatus. The protein localises to the trans-Golgi network membrane. It is found in the melanosome. Involved in melanosome biogenesis by ensuring the stability of GPR143. Plays a vital role in the expression, stability, trafficking, and processing of melanocyte protein PMEL, which is critical to the formation of stage II melanosomes. The chain is Melanoma antigen recognized by T-cells 1 (MLANA) from Homo sapiens (Human).